The chain runs to 264 residues: Phosphonoacetaldehyde hydrolase (264 aa).

Aspartate 9 acts as the Nucleophile in catalysis. Residues aspartate 9 and alanine 11 each contribute to the Mg(2+) site. Lysine 50 functions as the Schiff-base intermediate with substrate in the catalytic mechanism. Aspartate 183 contributes to the Mg(2+) binding site.

It belongs to the HAD-like hydrolase superfamily. PhnX family. As to quaternary structure, homodimer. Mg(2+) is required as a cofactor.

The catalysed reaction is phosphonoacetaldehyde + H2O = acetaldehyde + phosphate + H(+). Its function is as follows. Involved in phosphonate degradation. The polypeptide is Phosphonoacetaldehyde hydrolase (Bacillus cereus (strain B4264)).